A 577-amino-acid polypeptide reads, in one-letter code: MIKIIIKETFSFKSVLMHFLKEKVSNNKISKKNKIMPSYTLLSCIDSRVENLTKFYGRFELGPFAPGQALTVANALRRSLLSQLPGTSITLVEVRGASNEYEIITGVRESILDILLNLKQIVLTSDFEIFSPQIGFLSVEGPGVIRANDLKLPSFIYAVDPNQYIATLSNSGRLNMKFLICCGKNYITYNPNDSQYFEWLSLLKKSKPLIKSNSPKLNKGNINSEIDSDISIDKKNDEVIFFQNANTRVVDSQTALKKGLVLKNTLRINKSSFLINSNYQSFFPKTQQKAFSIFRKNSKTFLSTMGFYKEWKKEREFLKKDLYKNQEDFNKSYDFQETKKKLQTKLIKNFETPKKKLFKVQNSANPFNKAFIPLTEEKVDYDSDFNLDHKSTKIGYFPIDAIFMPINRVNYLIESTEDIKLKIKDRVILEVWTNGSIHPRHAIHKAAKALIQLFLPLQQIRTNLFLISDNSHFEEGQDKIKKRIDNFKKEALLKANPQIQANPQLKKRNFDHRLLELDIANLELTARPYSCLKLANINTIEDLISYSQEDLLSIKNFGRRSLIEVQKALQLMKLTLK.

Residues 1 to 461 form an alpha N-terminal domain (alpha-NTD) region; sequence MIKIIIKETF…QLFLPLQQIR (461 aa). An alpha C-terminal domain (alpha-CTD) region spans residues 510-577; sequence FDHRLLELDI…ALQLMKLTLK (68 aa).

This sequence belongs to the RNA polymerase alpha chain family. In plastids the minimal PEP RNA polymerase catalytic core is composed of four subunits: alpha, beta, beta', and beta''. When a (nuclear-encoded) sigma factor is associated with the core the holoenzyme is formed, which can initiate transcription.

The protein resides in the plastid. Its subcellular location is the chloroplast. It catalyses the reaction RNA(n) + a ribonucleoside 5'-triphosphate = RNA(n+1) + diphosphate. DNA-dependent RNA polymerase catalyzes the transcription of DNA into RNA using the four ribonucleoside triphosphates as substrates. In Tupiella akineta (Green alga), this protein is DNA-directed RNA polymerase subunit alpha.